A 7214-amino-acid polypeptide reads, in one-letter code: Nonribosomal peptide synthetase atnA (7214 aa).

The adenylation 1 stretch occupies residues Glu257–Ile651. In terms of domain architecture, Carrier 1 spans Glu786–Ser862. Residue Ser823 is modified to O-(pantetheine 4'-phosphoryl)serine. The condensation 1 stretch occupies residues Glu899–Ile1318. The adenylation 2 stretch occupies residues Gln1340 to Arg1735. A Carrier 2 domain is found at Gln1877–Glu1953. Ser1914 carries the O-(pantetheine 4'-phosphoryl)serine modification. The segment at Pro1962–Glu2384 is epimerization. The segment at Ser2431–Leu2845 is condensation 2. The interval Gln2866–Val3262 is adenylation 3. In terms of domain architecture, Carrier 3 spans Ala3398–Tyr3472. Ser3433 is subject to O-(pantetheine 4'-phosphoryl)serine. The segment at Val3510–Leu3904 is condensation 3. The segment at Glu3943 to Leu4339 is adenylation 4. The Carrier 4 domain maps to Val4476 to Ser4552. Ser4513 is subject to O-(pantetheine 4'-phosphoryl)serine. The condensation 4 stretch occupies residues Val4601–Leu5033. Residues Phe5051 to Phe5446 form an adenylation 5 region. Positions Phe5489 to Ser5515 are disordered. The Carrier 5 domain maps to Ala5591 to Ala5667. O-(pantetheine 4'-phosphoryl)serine is present on Ser5628. A condensation 5 region spans residues Gln5707 to Met6123. Residues Glu6145 to Arg6543 are adenylation 6. Residues Asp6683–Asn6766 enclose the Carrier 6 domain. Ser6725 carries the post-translational modification O-(pantetheine 4'-phosphoryl)serine. The thioesterase (TE) domain stretch occupies residues Ile6814–Gly7194. The segment at Ser6895–Glu6915 is disordered.

Belongs to the NRP synthetase family.

The protein operates within secondary metabolite biosynthesis. Functionally, nonribosomal peptide synthetase; part of the gene cluster that mediates the biosynthesis of aspercryptins, linear lipopeptides built from six amino acids including 2 highly unusual and nonproteogenic amino acids, 2-amino-octanoic acid (2aoa) and 2-amino-dodecanol (2adol). The core structure of aspercryptins is as follows: Ser/Ala-Thr-Ile/Val-2aoa-Asn-2adol. The first step of aspercryptin biosynthesis is the generation of the fatty acid precursors, octanoic and dodecanoic acids, by the FAS subunits atnF and atnM. The fatty acid precursors are likely transformed into the corresponding alpha-amino fatty acids in three steps. First, they are hydroxylated by the cytochrome P450 monooxygenase atnE, then oxidized to the corresponding alpha-keto acids by the NAD(P)-dependent oxidoreductase atnD, and finally converted to the alpha-amino fatty acids by the PLP-dependent aminotransferases atnH or atnJ. the alpha-amino fatty acids, 2-amino-octanoic and 2-amino-dodecanoic acids, are recognized, activated, and covalently tethered to the NRPS atnA by its fourth and sixth adenylation domains. The second module of atnA is the Thr module and contains an epimerase (E) domain responsible for the epimerization of Thr to D-allo-Thr. Additionally, despite atnA having only one epimerase domain, the first amino acid of aspercryptin A1 is D-Ser, suggesting that serine is either loaded directly as D-Ser on the first module or that the epimerase domain in the threonine module epimerizes both L-Ser and L-Thr. After condensation of the hexapeptide of aspercryptin, the C-terminal reductase (TE) domain might be involved in the reductive release and production of the aldehyde hexapeptide. Further reduction would generate aspercryptins. The variety of aspercryptins produced reflects the flexibility of the atnA NRPS, allowing incorporation of alanine instead of serine, valine for isoleucine, and a C10 fatty amino alcohol instead of the C12 version. AtnB seems to be involved in the selectivity for Ile versus Val by the third module. Moreover, type B, C and D aspercryptins have an additional N-terminal cichorine, acetyl and propionyl group respectively. This Emericella nidulans (strain FGSC A4 / ATCC 38163 / CBS 112.46 / NRRL 194 / M139) (Aspergillus nidulans) protein is Nonribosomal peptide synthetase atnA.